We begin with the raw amino-acid sequence, 61 residues long: Small ribosomal subunit protein uS14 (61 aa).

Zn(2+) contacts are provided by Cys-24, Cys-27, Cys-40, and Cys-43.

Belongs to the universal ribosomal protein uS14 family. Zinc-binding uS14 subfamily. In terms of assembly, part of the 30S ribosomal subunit. Contacts proteins S3 and S10. Zn(2+) serves as cofactor.

Its function is as follows. Binds 16S rRNA, required for the assembly of 30S particles and may also be responsible for determining the conformation of the 16S rRNA at the A site. This is Small ribosomal subunit protein uS14 from Mycoplasmopsis pulmonis (strain UAB CTIP) (Mycoplasma pulmonis).